A 587-amino-acid polypeptide reads, in one-letter code: Protein NDNF (587 aa).

Positions 1-24 are cleaved as a signal peptide; it reads MQRSTMLPGVELLLLFLLSTSLHA. Asparagine 109, asparagine 129, asparagine 190, asparagine 321, asparagine 334, asparagine 459, asparagine 498, and asparagine 558 each carry an N-linked (GlcNAc...) asparagine glycan.

As to quaternary structure, binds heparin. Interacts with dally; the interaction promotes dally degradation. Interacts with dpp and gbb.

Its subcellular location is the secreted. The protein localises to the extracellular space. It localises to the extracellular matrix. Secretory protein that acts as a feedback regulator of dpp/BMP, wg and hh signaling pathways. In the developing wing, is a dosage-dependent modulator of dpp/BMP signaling involved in wing growth and crossvein patterning; low levels promote and high levels inhibit dpp/BMP signaling. In the early pupal wing, inhibits dpp/BMP signaling activity to prevent the formation of ectopic crossveins in the posterior compartment. Binds to dpp and gbb to modulate their release and activity decreasing dpp/BMP signaling in the responding cells. During wing development regulates dpp/BMP coreceptor dally availability on the cell surface. Might have a role in testis development. In Drosophila melanogaster (Fruit fly), this protein is Protein NDNF.